Here is a 372-residue protein sequence, read N- to C-terminus: Putative actin-27 (372 aa).

This sequence belongs to the actin family.

The protein localises to the cytoplasm. Its subcellular location is the cytoskeleton. The enzyme catalyses ATP + H2O = ADP + phosphate + H(+). In terms of biological role, actins are highly conserved proteins that are involved in various types of cell motility and are ubiquitously expressed in all eukaryotic cells. Multiple isoforms are involved in various cellular functions such as cytoskeleton structure, cell mobility, chromosome movement and muscle contraction. The protein is Putative actin-27 (act27) of Dictyostelium discoideum (Social amoeba).